A 294-amino-acid chain; its full sequence is Gap junction delta-3 protein (294 aa).

The Cytoplasmic segment spans residues 1-24 (MGEWAFLGSLLDAVQLQSPLVGRL). A helical membrane pass occupies residues 25–45 (WLVVMLIFRILVLATVGGAVF). The Extracellular portion of the chain corresponds to 46-76 (EDEQEEFVCNTLQPGCRQTCYDRAFPVSHYR). The helical transmembrane segment at 77–97 (FWLFHILLLSAPPVLFVVYSM) threads the bilayer. Over 98–136 (HRAGKEAGGAEAAAQCAPGLPEAQCAPCALRARRARRCY) the chain is Cytoplasmic. The helical transmembrane segment at 137–157 (LLSVALRLLAELTFLGGQALL) threads the bilayer. Residues 158-188 (YGFRVAPHFACAGPPCPHTVDCFVSRPTEKT) lie on the Extracellular side of the membrane. Residues 189 to 209 (VFVLFYFAVGLLSALLSVAEL) traverse the membrane as a helical segment. Over 210-294 (GHLLWKGRPR…PATGRRDLAI (85 aa)) the chain is Cytoplasmic. The tract at residues 233–294 (EAQKLLPPPP…PATGRRDLAI (62 aa)) is disordered. Residues 238-250 (LPPPPPPPPPPAL) are compositionally biased toward pro residues.

The protein belongs to the connexin family. Delta-type subfamily. A connexon is composed of a hexamer of connexins. Interacts with TJP1. In terms of tissue distribution, expressed in vascular smooth muscle cells. Found in heart, colon, and artery (at protein level). Found in cerebral cortex, heart, liver, lung, kidney, spleen and testis.

It localises to the cell membrane. It is found in the cell junction. The protein localises to the gap junction. Its function is as follows. One gap junction consists of a cluster of closely packed pairs of transmembrane channels, the connexons, through which materials of low MW diffuse from one cell to a neighboring cell. This chain is Gap junction delta-3 protein (GJD3), found in Homo sapiens (Human).